Consider the following 628-residue polypeptide: Alpha-L-arabinofuranosidase A (628 aa).

An N-terminal signal peptide occupies residues 1–25 (MVAFSALSGVSALSLLLCLVQHAHG). N-linked (GlcNAc...) asparagine glycans are attached at residues Asn-36, Asn-51, Asn-74, Asn-152, Asn-171, Asn-260, Asn-359, and Asn-493.

This sequence belongs to the glycosyl hydrolase 51 family.

The protein localises to the secreted. It carries out the reaction Hydrolysis of terminal non-reducing alpha-L-arabinofuranoside residues in alpha-L-arabinosides.. The protein operates within glycan metabolism; L-arabinan degradation. In terms of biological role, alpha-L-arabinofuranosidase involved in the degradation of arabinoxylan, a major component of plant hemicellulose. Acts only on small linear 1,5-alpha-linked L-arabinofuranosyl oligosaccharides. In Aspergillus kawachii (strain NBRC 4308) (White koji mold), this protein is Alpha-L-arabinofuranosidase A (abfA).